We begin with the raw amino-acid sequence, 261 residues long: (R)-S-adenosyl-L-methionine hydrolase (261 aa).

Adenosine is bound by residues Asp12, Asp72, and Asn187. Residues Asn187, Ser231, and Val239 each coordinate (R)-S-adenosyl-L-methionine. Val239 provides a ligand contact to adenosine.

The protein belongs to the SAM hydrolase / SAM-dependent halogenase family.

It catalyses the reaction (R)-S-adenosyl-L-methionine + H2O = adenosine + L-methionine + H(+). Activity is inhibited by chloride. Catalyzes the hydrolysis of S-adenosyl-L-methionine (SAM) into adenosine and L-methionine. Is likely stereoselective, specifically hydrolyzing (R)-S-adenosyl-L-methionine ((R)-SAM), the inactive form of the ubiquitous cofactor SAM, and not the active form of SAM, (S)-S-adenosyl-L-methionine. Probaly plays a role in preventing accumulation of (R)-S-adenosyl-L-methionine in cells; maintenance of (S)-S-denosyl-L-methionine homochirality is important for cellular health given that the (R)-form is largely inactive as a methyl donor and can function as an inhibitor of methyltransferases. Shows very slow iodinase activity in vitro. The chain is (R)-S-adenosyl-L-methionine hydrolase from Salinispora arenicola (strain CNS-205).